The following is a 206-amino-acid chain: Protein tyrosine phosphatase receptor type C-associated protein (206 aa).

Residues 34–54 form a helical membrane-spanning segment; sequence VTVVLLLLLLLLLATGLALAW. Positions 98-173 are disordered; sequence GSTDNDLERQ…PGPASAGGSA (76 aa). 2 positions are modified to phosphoserine: serine 99 and serine 153. Over residues 161 to 173 the composition is skewed to low complexity; sequence LGSPGPASAGGSA.

Interacts with CD45/PTPRC. Phosphorylated on tyrosine residues.

It is found in the membrane. The chain is Protein tyrosine phosphatase receptor type C-associated protein (PTPRCAP) from Homo sapiens (Human).